The following is a 766-amino-acid chain: 1,4-alpha-glucan branching enzyme GlgB (766 aa).

The active-site Nucleophile is D431. The active-site Proton donor is the E484.

This sequence belongs to the glycosyl hydrolase 13 family. GlgB subfamily. Monomer.

It catalyses the reaction Transfers a segment of a (1-&gt;4)-alpha-D-glucan chain to a primary hydroxy group in a similar glucan chain.. The protein operates within glycan biosynthesis; glycogen biosynthesis. Functionally, catalyzes the formation of the alpha-1,6-glucosidic linkages in glycogen by scission of a 1,4-alpha-linked oligosaccharide from growing alpha-1,4-glucan chains and the subsequent attachment of the oligosaccharide to the alpha-1,6 position. This is 1,4-alpha-glucan branching enzyme GlgB from Thermosynechococcus vestitus (strain NIES-2133 / IAM M-273 / BP-1).